Reading from the N-terminus, the 288-residue chain is 18S rRNA aminocarboxypropyltransferase (288 aa).

Residues S43, V91, L114, and W129 each coordinate S-adenosyl-L-methionine. Positions 209-221 (IWSAGNLNHKPTL) are enriched in polar residues. A disordered region spans residues 209–267 (IWSAGNLNHKPTLNTSSTHSNSEESRSPLHEPSEASLAHDEHSIPTDDNEETLTNLQAN). Residues 229–253 (NSEESRSPLHEPSEASLAHDEHSIP) are compositionally biased toward basic and acidic residues.

Belongs to the TDD superfamily. TSR3 family.

The protein localises to the cytoplasm. The protein resides in the nucleus. The catalysed reaction is an N(1)-methylpseudouridine in rRNA + S-adenosyl-L-methionine = N(1)-methyl-N(3)-[(3S)-3-amino-3-carboxypropyl]pseudouridine in rRNA + S-methyl-5'-thioadenosine + H(+). It catalyses the reaction N(1)-methylpseudouridine(1191) in yeast 18S rRNA + S-adenosyl-L-methionine = N(1)-methyl-N(3)-[(3S)-3-amino-3-carboxypropyl]pseudouridine(1191) in yeast 18S rRNA + S-methyl-5'-thioadenosine + H(+). Its function is as follows. Aminocarboxypropyltransferase that catalyzes the aminocarboxypropyl transfer on pseudouridine at position 1191 (Psi1191) in 18S rRNA. It constitutes the last step in biosynthesis of the hypermodified N1-methyl-N3-(3-amino-3-carboxypropyl) pseudouridine (m1acp3-Psi) conserved in eukaryotic 18S rRNA. Required for processing 35S pre-rRNA at site D. The chain is 18S rRNA aminocarboxypropyltransferase from Schizosaccharomyces pombe (strain 972 / ATCC 24843) (Fission yeast).